The sequence spans 231 residues: Cytochrome c oxidase subunit 2 (231 aa).

Residues 1 to 30 lie on the Mitochondrial intermembrane side of the membrane; that stretch reads MNNFFQGYNLLFQHSLFASYMDWFHSFNCS. The chain crosses the membrane as a helical span at residues 31-52; the sequence is LLLGVLVFVTLLFGYLIFGTFY. Topologically, residues 53–69 are mitochondrial matrix; sequence FKSKKIEYQFGELLCSI. Residues 70–89 traverse the membrane as a helical segment; the sequence is FPTIILLMQMVPSLSLLYYY. Residues 90-231 are Mitochondrial intermembrane-facing; that stretch reads GLMNLDSNLT…FKSWCFGTME (142 aa). Cu cation contacts are provided by His-164, Cys-199, Glu-201, Cys-203, His-207, and Met-210. Glu-201 is a binding site for Mg(2+).

Belongs to the cytochrome c oxidase subunit 2 family. Component of the cytochrome c oxidase (complex IV, CIV), a multisubunit enzyme composed of a catalytic core of 3 subunits and several supernumerary subunits. The complex exists as a monomer or a dimer and forms supercomplexes (SCs) in the inner mitochondrial membrane with ubiquinol-cytochrome c oxidoreductase (cytochrome b-c1 complex, complex III, CIII). Cu cation is required as a cofactor.

It is found in the mitochondrion inner membrane. It catalyses the reaction 4 Fe(II)-[cytochrome c] + O2 + 8 H(+)(in) = 4 Fe(III)-[cytochrome c] + 2 H2O + 4 H(+)(out). In terms of biological role, component of the cytochrome c oxidase, the last enzyme in the mitochondrial electron transport chain which drives oxidative phosphorylation. The respiratory chain contains 3 multisubunit complexes succinate dehydrogenase (complex II, CII), ubiquinol-cytochrome c oxidoreductase (cytochrome b-c1 complex, complex III, CIII) and cytochrome c oxidase (complex IV, CIV), that cooperate to transfer electrons derived from NADH and succinate to molecular oxygen, creating an electrochemical gradient over the inner membrane that drives transmembrane transport and the ATP synthase. Cytochrome c oxidase is the component of the respiratory chain that catalyzes the reduction of oxygen to water. Electrons originating from reduced cytochrome c in the intermembrane space (IMS) are transferred via the dinuclear copper A center (CU(A)) of subunit 2 and heme A of subunit 1 to the active site in subunit 1, a binuclear center (BNC) formed by heme A3 and copper B (CU(B)). The BNC reduces molecular oxygen to 2 water molecules using 4 electrons from cytochrome c in the IMS and 4 protons from the mitochondrial matrix. The sequence is that of Cytochrome c oxidase subunit 2 from Caenorhabditis elegans.